Reading from the N-terminus, the 33-residue chain is Brevinin-2PTb (33 aa).

The cysteines at positions 27 and 33 are disulfide-linked.

In terms of tissue distribution, expressed by the skin glands.

It localises to the secreted. Functionally, has antibacterial activity against the Gram-positive bacterium S.aureus ATCC 25923 (MIC=9 uM) and the Gram-negative bacterium E.coli ATCC 25726 (MIC=9 uM). The chain is Brevinin-2PTb from Pulchrana picturata (Malaysian fire frog).